A 257-amino-acid polypeptide reads, in one-letter code: PHD finger protein Alfin1 (257 aa).

The segment at 145 to 200 is disordered; it reads SKDQLTAHNNGSNSKYKSSGKSRQSESQTKGVKMSAPVKEEVDSGEEEEEDDDEQG. The segment covering 153–166 has biased composition (low complexity); that stretch reads NNGSNSKYKSSGKS. Over residues 187 to 199 the composition is skewed to acidic residues; that stretch reads DSGEEEEEDDDEQ. A PHD-type zinc finger spans residues 200–252; sequence GATCGACGDNYGTDEFWICCDMCEKWFHGKCVKITPAKAEHIKQYKCPGCSIK.

This sequence belongs to the Alfin family. Interacts with H3K4me3 and to a lesser extent with H3K4me2. Predominantly expressed in the roots.

The protein resides in the nucleus. Functionally, histone-binding component that specifically recognizes H3 tails trimethylated on 'Lys-4' (H3K4me3), which mark transcription start sites of virtually all active genes. Transcriptional regulator that binds specifically to DNA sequences 5'-GNGGTG-3' or 5'-GTGGNG-3', including promoter elements of the salt-inducible PRP2 gene. Plays a role in salinity tolerance. In Medicago sativa (Alfalfa), this protein is PHD finger protein Alfin1 (ALFIN-1).